The following is a 164-amino-acid chain: C-phycoerythrin class 1 subunit alpha (164 aa).

Positions 82 and 139 each coordinate (2R,3E)-phycoerythrobilin.

The protein belongs to the phycobiliprotein family. Heterodimer of an alpha and a beta chain. In terms of processing, contains two covalently linked phycoerythrobilin chromophores.

Its subcellular location is the cellular thylakoid membrane. Functionally, light-harvesting photosynthetic bile pigment-protein from the phycobiliprotein complex. This chain is C-phycoerythrin class 1 subunit alpha (cpeA), found in Synechococcus sp. (strain WH8020).